Here is a 338-residue protein sequence, read N- to C-terminus: Porphobilinogen deaminase (338 aa).

Cys265 bears the S-(dipyrrolylmethanemethyl)cysteine mark.

This sequence belongs to the HMBS family. Dipyrromethane serves as cofactor.

It carries out the reaction 4 porphobilinogen + H2O = hydroxymethylbilane + 4 NH4(+). Its pathway is porphyrin-containing compound metabolism; protoporphyrin-IX biosynthesis; coproporphyrinogen-III from 5-aminolevulinate: step 2/4. Functionally, tetrapolymerization of the monopyrrole PBG into the hydroxymethylbilane pre-uroporphyrinogen in several discrete steps. In Yarrowia lipolytica (strain CLIB 122 / E 150) (Yeast), this protein is Porphobilinogen deaminase (HEM3).